The primary structure comprises 240 residues: Biosynthetic peptidoglycan transglycosylase (240 aa).

Residues 27–47 (VVLLFFFAVFALLLIFRFVPI) traverse the membrane as a helical segment.

This sequence belongs to the glycosyltransferase 51 family.

The protein localises to the cell inner membrane. It catalyses the reaction [GlcNAc-(1-&gt;4)-Mur2Ac(oyl-L-Ala-gamma-D-Glu-L-Lys-D-Ala-D-Ala)](n)-di-trans,octa-cis-undecaprenyl diphosphate + beta-D-GlcNAc-(1-&gt;4)-Mur2Ac(oyl-L-Ala-gamma-D-Glu-L-Lys-D-Ala-D-Ala)-di-trans,octa-cis-undecaprenyl diphosphate = [GlcNAc-(1-&gt;4)-Mur2Ac(oyl-L-Ala-gamma-D-Glu-L-Lys-D-Ala-D-Ala)](n+1)-di-trans,octa-cis-undecaprenyl diphosphate + di-trans,octa-cis-undecaprenyl diphosphate + H(+). Its pathway is cell wall biogenesis; peptidoglycan biosynthesis. In terms of biological role, peptidoglycan polymerase that catalyzes glycan chain elongation from lipid-linked precursors. The protein is Biosynthetic peptidoglycan transglycosylase of Haemophilus influenzae (strain PittEE).